The chain runs to 157 residues: Small ribosomal subunit protein uS7 (157 aa).

The protein belongs to the universal ribosomal protein uS7 family. Part of the 30S ribosomal subunit. Contacts proteins S9 and S11.

Its function is as follows. One of the primary rRNA binding proteins, it binds directly to 16S rRNA where it nucleates assembly of the head domain of the 30S subunit. Is located at the subunit interface close to the decoding center, probably blocks exit of the E-site tRNA. This chain is Small ribosomal subunit protein uS7, found in Bdellovibrio bacteriovorus (strain ATCC 15356 / DSM 50701 / NCIMB 9529 / HD100).